Here is a 282-residue protein sequence, read N- to C-terminus: N-methyltransferase gliN (282 aa).

The protein belongs to the methyltransferase superfamily. LaeA methyltransferase family.

It functions in the pathway mycotoxin biosynthesis. Its function is as follows. N-methyltransferase; part of the gene cluster that mediates the biosynthesis of gliotoxin, a member of the epipolythiodioxopiperazine (ETP) class of toxins characterized by a disulfide bridged cyclic dipeptide. The first step in gliotoxin biosynthesis is the condensation of serine and phenylalanine to form the cyclo-L-phenylalanyl-L-serine diketopiperazine (DKP) by the NRPS gliP. GliP is also able to produce the DKP cyclo-L-tryptophanyl-L-serine, suggesting that the substrate specificity of the first adenylation (A) domain in gliP is sufficiently relaxed to accommodate both L-Phe and L-Trp. The cytochrome P450 monooxygenase gliC has been shown to catalyze the subsequent hydroxylation of the alpha-carbon of L-Phe in cyclo-L-phenylalanyl-L-serine whereas the second cytochrome P450 enzyme, gliF, is presumably involved in the modification of the DKP side chain. The glutathione S-transferase (GST) gliG then forms a bis-glutathionylated biosynthetic intermediate which is responsible for the sulfurization of gliotoxin. This bis-glutathionylated intermediate is subsequently processed by the gamma-glutamyl cyclotransferase gliK to remove both gamma-glutamyl moieties. Subsequent processing via gliI yields a biosynthetic intermediate, which is N-methylated via the N-methyltransferase gliN, before the gliotoxin oxidoreductase gliT-mediated disulfide bridge closure. GliN-mediated amide methylation confers stability to ETP, damping the spontaneous formation of tri- and tetrasulfides. Intracellular dithiol gliotoxin oxidized by gliT is subsequently effluxed by gliA. Gliotoxin contributes to pathogenesis during invasive aspergillosis. In macrophages and neutrophils, gliotoxin showed inhibition of various different cell functions including cytokine production, antigen presentation, phagocytosis, and production of reactive oxygen species. The chain is N-methyltransferase gliN from Aspergillus fumigatus (strain ATCC MYA-4609 / CBS 101355 / FGSC A1100 / Af293) (Neosartorya fumigata).